The following is a 178-amino-acid chain: Caveolin-1 (178 aa).

Serine 2 is modified (N-acetylserine). Residue serine 2 is modified to Phosphoserine. Residues 2–94 (SGGKYVDSEG…WKASFTTFTV (93 aa)) form a required for homooligomerization region. The Cytoplasmic portion of the chain corresponds to 2–104 (SGGKYVDSEG…TKYWFYRLLS (103 aa)). Lysine 5 bears the N6-acetyllysine; alternate mark. Residue lysine 5 forms a Glycyl lysine isopeptide (Lys-Gly) (interchain with G-Cter in ubiquitin); alternate linkage. At tyrosine 6 the chain carries Phosphotyrosine. The residue at position 9 (serine 9) is a Phosphoserine. Residue tyrosine 14 is modified to Phosphotyrosine; by ABL1. A Phosphotyrosine modification is found at tyrosine 25. Glycyl lysine isopeptide (Lys-Gly) (interchain with G-Cter in ubiquitin) cross-links involve residues lysine 26, lysine 30, lysine 39, lysine 47, and lysine 57. The segment at 82-94 (DGIWKASFTTFTV) is interaction with CAVIN3. Positions 105 to 125 (ALFGIPMALIWGIYFAILSFL) form an intramembrane region, helical. The Cytoplasmic segment spans residues 126-178 (HIWAVVPCIKSFLIEIQCISRVYSIYVHTFCDPLFEAIGKIFSNIRINMQKEI). Residues 131 to 142 (VPCIKSFLIEIQ) are interacts with SPRY1, SPRY2, SPRY3 and SPRY4. Residues cysteine 133, cysteine 143, and cysteine 156 are each lipidated (S-palmitoyl cysteine). The tract at residues 149-160 (SIYVHTFCDPLF) is interacts with SPRY1, SPRY2, and SPRY4. The interval 167-178 (FSNIRINMQKEI) is interacts with SPRY1, SPRY2, SPRY3 and SPRY4.

The protein belongs to the caveolin family. Homooligomer. Interacts with GLIPR2. Interacts with NOSTRIN. Interacts with SNAP25 and STX1A. Interacts (via the N-terminus) with DPP4; the interaction is direct. Interacts with CTNNB1, CDH1 and JUP. Interacts with PACSIN2; this interaction induces membrane tubulation. Interacts with SLC7A9. Interacts with BMX and BTK. Interacts with TGFBR1. Interacts with CAVIN3 (via leucine-zipper domain) in a cholesterol-sensitive manner. Interacts with CAVIN1. Interacts with EHD2 in a cholesterol-dependent manner. Forms a ternary complex with UBXN6 and VCP; mediates CAV1 targeting to lysosomes for degradation. Interacts with ABCG1; this interaction regulates ABCG1-mediated cholesterol efflux. Interacts with NEU3; this interaction enhances NEU3 sialidase activity within caveola. Interacts (via C-terminus) with SPRY1, SPRY2 (via C-terminus), SPRY3, and SPRY4. Interacts with IGFBP5; this interaction allows trafficking of IGFBP5 from the plasma membrane to the nucleus. Post-translationally, phosphorylated at Tyr-14 by ABL1 in response to oxidative stress. In terms of processing, ubiquitinated. Undergo monoubiquitination and multi- and/or polyubiquitination. Monoubiquitination of N-terminal lysines promotes integration in a ternary complex with UBXN6 and VCP which promotes oligomeric CAV1 targeting to lysosomes for degradation. Ubiquitinated by ZNRF1; leading to degradation and modulation of the TLR4-mediated immune response.

Its subcellular location is the golgi apparatus membrane. It localises to the cell membrane. It is found in the membrane. The protein localises to the caveola. The protein resides in the membrane raft. Its function is as follows. May act as a scaffolding protein within caveolar membranes. Forms a stable heterooligomeric complex with CAV2 that targets to lipid rafts and drives caveolae formation. Mediates the recruitment of CAVIN proteins (CAVIN1/2/3/4) to the caveolae. Interacts directly with G-protein alpha subunits and can functionally regulate their activity. Involved in the costimulatory signal essential for T-cell receptor (TCR)-mediated T-cell activation. Its binding to DPP4 induces T-cell proliferation and NF-kappa-B activation in a T-cell receptor/CD3-dependent manner. Recruits CTNNB1 to caveolar membranes and may regulate CTNNB1-mediated signaling through the Wnt pathway. Negatively regulates TGFB1-mediated activation of SMAD2/3 by mediating the internalization of TGFBR1 from membrane rafts leading to its subsequent degradation. Binds 20(S)-hydroxycholesterol (20(S)-OHC). The chain is Caveolin-1 (CAV1) from Muntiacus muntjak (Barking deer).